Here is a 188-residue protein sequence, read N- to C-terminus: Molybdopterin synthase catalytic subunit (188 aa).

Serine 20 is modified (phosphoserine). Residues 143–144, lysine 159, and 166–168 contribute to the substrate site; these read HR and KKE.

Belongs to the MoaE family. MOCS2B subfamily. Heterotetramer; composed of 2 small (MOCS2A) and 2 large (MOCS2B) subunits. As to expression, highest levels are found in heart and skeletal muscle. Lower levels are present in brain, kidney and pancreas. Very low levels are found in lung and peripheral blood leukocytes.

The protein resides in the cytoplasm. The protein localises to the cytosol. It carries out the reaction 2 [molybdopterin-synthase sulfur-carrier protein]-C-terminal-Gly-aminoethanethioate + cyclic pyranopterin phosphate + H2O = molybdopterin + 2 [molybdopterin-synthase sulfur-carrier protein]-C-terminal Gly-Gly + 2 H(+). It functions in the pathway cofactor biosynthesis; molybdopterin biosynthesis. Functionally, catalytic subunit of the molybdopterin synthase complex, a complex that catalyzes the conversion of precursor Z into molybdopterin. Acts by mediating the incorporation of 2 sulfur atoms from thiocarboxylated MOCS2A into precursor Z to generate a dithiolene group. This Homo sapiens (Human) protein is Molybdopterin synthase catalytic subunit.